Here is a 535-residue protein sequence, read N- to C-terminus: Serine/threonine-protein kinase C (535 aa).

The region spanning 12–277 is the Protein kinase domain; it reads YRIIETLGRG…AMAQTLQGNF (266 aa). Residues 18–26 and Lys43 contribute to the ATP site; that span reads LGRGGFGET. Catalysis depends on Asp142, which acts as the Proton acceptor. The tract at residues 371 to 535 is disordered; that stretch reads NNPPPAVEEP…GEKPIDPEQN (165 aa). Over residues 402-421 the composition is skewed to pro residues; that stretch reads SPIPTPATPSPEPTPSPSPS. A compositionally biased stretch (low complexity) spans 422-435; sequence PETTSSPTEDTITP. Composition is skewed to pro residues over residues 446–464 and 472–498; these read APIPEPKPSPSPTISPQPS and TPAPVPKPSPSPTPKPTVPPQISPTPQ.

This sequence belongs to the protein kinase superfamily. Ser/Thr protein kinase family.

The enzyme catalyses L-seryl-[protein] + ATP = O-phospho-L-seryl-[protein] + ADP + H(+). The catalysed reaction is L-threonyl-[protein] + ATP = O-phospho-L-threonyl-[protein] + ADP + H(+). The sequence is that of Serine/threonine-protein kinase C (spkC) from Synechocystis sp. (strain ATCC 27184 / PCC 6803 / Kazusa).